The following is a 965-amino-acid chain: Phosphatidylethanolamine N-methyltransferase (965 aa).

Residues 1 to 82 (MDRGLSTGTN…SPSEPKNLSD (82 aa)) lie on the Lumenal side of the membrane. Positions 34–54 (PTVTNASNGKDKAGKTFGRTP) are disordered. Residues 83-103 (LVVLTILAGHIFLLWILPSGA) traverse the membrane as a helical segment. Over 104-106 (KIP) the chain is Cytoplasmic. A helical transmembrane segment spans residues 107–127 (VFAVIYLFWRSCYNAGIGWLL). The Lumenal segment spans residues 128–192 (HNQSHHKTLV…EYNTWLVFRR (65 aa)). The helical transmembrane segment at 193–213 (LVDLILMCDFASYCLFAIACS) threads the bilayer. The Cytoplasmic segment spans residues 214–220 (RHPANES). The helical transmembrane segment at 221-241 (VLMTVIRWTSGIALVLFNLWV) threads the bilayer. Residues 242-274 (KLDAHRVVKDYAWYWGDFFYLIDQELTFDGVFE) lie on the Lumenal side of the membrane. The chain crosses the membrane as a helical span at residues 275 to 295 (MAPHPMYSVGYAGYYGISLMA). Topologically, residues 296 to 297 (AS) are cytoplasmic. A helical membrane pass occupies residues 298-318 (YKVLFISIIAHAAQFAFLVLV). Residues 319–394 (ENPHIDKTYN…LDLHRITDTS (76 aa)) are Lumenal-facing. The segment at 326 to 368 (TYNPPPPRKRTITEHDAASQRSQSPDTPNAPSVSEENVPNATT) is disordered. Polar residues predominate over residues 344–368 (SQRSQSPDTPNAPSVSEENVPNATT). The helical transmembrane segment at 395-415 (SILVQFLMFSLTVLTPSTPWY) threads the bilayer. Glutamine 416 is a topological domain (cytoplasmic). A helical transmembrane segment spans residues 417–437 (FLFVANAAIWRLWYSVGIGYL). Residues 438 to 470 (LNRQSNCKSWTRHFVKYGETPHEAWNQWKGTYH) are Lumenal-facing. A helical transmembrane segment spans residues 471–491 (LSMVMCYASFISAVWKMYTLP). Over 492–503 (SNWGYGLAILRH) the chain is Cytoplasmic. The helical transmembrane segment at 504-524 (VLGAGLISLQIWTSVSIYESL) threads the bilayer. Residues 525–559 (GEFGWFYGDFFFDESPKLTYNGIYRFLNNPERVLG) are Lumenal-facing. A helical transmembrane segment spans residues 560–580 (LAGVWGAVLITASGTVAFLAF). Residues 581–965 (LSHILSLGFI…GATTPTESKE (385 aa)) are Cytoplasmic-facing.

This sequence belongs to the class VI-like SAM-binding methyltransferase superfamily. CHO2 family.

The protein localises to the endoplasmic reticulum membrane. It catalyses the reaction a 1,2-diacyl-sn-glycero-3-phosphoethanolamine + S-adenosyl-L-methionine = a 1,2-diacyl-sn-glycero-3-phospho-N-methylethanolamine + S-adenosyl-L-homocysteine + H(+). Its pathway is phospholipid metabolism; phosphatidylcholine biosynthesis. Its function is as follows. Catalyzes the first step of the methylation pathway of phosphatidylcholine biosynthesis, the SAM-dependent methylation of phosphatidylethanolamine (PE) to phosphatidylmonomethylethanolamine (PMME). The chain is Phosphatidylethanolamine N-methyltransferase from Emericella nidulans (strain FGSC A4 / ATCC 38163 / CBS 112.46 / NRRL 194 / M139) (Aspergillus nidulans).